The chain runs to 200 residues: Phospholipase A2 inhibitor LNF2 (200 aa).

The signal sequence occupies residues 1–19; sequence MKSLHTICLLFIFVARGNS. 8 disulfide bridges follow: Cys22–Cys46, Cys25–Cys32, Cys39–Cys67, Cys73–Cys94, Cys95–Cys100, Cys118–Cys143, Cys136–Cys165, and Cys169–Cys191. Asn176 is a glycosylation site (N-linked (GlcNAc...) asparagine).

It belongs to the CNF-like-inhibitor family. In terms of assembly, occurs as a mixture of oligomers. Tetrameric arrangement appears to be the predominant quaternary structure. In terms of tissue distribution, expressed by the liver.

The protein localises to the secreted. Inhibits the enzymatic activity of phospholipase A2 (PA2). This is Phospholipase A2 inhibitor LNF2 from Lachesis muta muta (Bushmaster).